The sequence spans 406 residues: Dual-specificity RNA methyltransferase RlmN (406 aa).

The Proton acceptor role is filled by glutamate 119. The Radical SAM core domain maps to 125–370 (DKGRGTLCVS…AMVRRTRGDD (246 aa)). Cysteine 132 and cysteine 375 are joined by a disulfide. [4Fe-4S] cluster is bound by residues cysteine 139, cysteine 143, and cysteine 146. Residues 192 to 193 (GE), serine 224, 246 to 248 (SLH), and asparagine 332 each bind S-adenosyl-L-methionine. Cysteine 375 serves as the catalytic S-methylcysteine intermediate.

It belongs to the radical SAM superfamily. RlmN family. Requires [4Fe-4S] cluster as cofactor.

It is found in the cytoplasm. The enzyme catalyses adenosine(2503) in 23S rRNA + 2 reduced [2Fe-2S]-[ferredoxin] + 2 S-adenosyl-L-methionine = 2-methyladenosine(2503) in 23S rRNA + 5'-deoxyadenosine + L-methionine + 2 oxidized [2Fe-2S]-[ferredoxin] + S-adenosyl-L-homocysteine. It carries out the reaction adenosine(37) in tRNA + 2 reduced [2Fe-2S]-[ferredoxin] + 2 S-adenosyl-L-methionine = 2-methyladenosine(37) in tRNA + 5'-deoxyadenosine + L-methionine + 2 oxidized [2Fe-2S]-[ferredoxin] + S-adenosyl-L-homocysteine. Specifically methylates position 2 of adenine 2503 in 23S rRNA and position 2 of adenine 37 in tRNAs. m2A2503 modification seems to play a crucial role in the proofreading step occurring at the peptidyl transferase center and thus would serve to optimize ribosomal fidelity. The sequence is that of Dual-specificity RNA methyltransferase RlmN from Xylella fastidiosa (strain Temecula1 / ATCC 700964).